The following is a 348-amino-acid chain: Protein pelota homolog (348 aa).

This sequence belongs to the eukaryotic release factor 1 family. Pelota subfamily. In terms of assembly, monomer. A divalent metal cation is required as a cofactor.

The protein resides in the cytoplasm. May function in recognizing stalled ribosomes, interact with stem-loop structures in stalled mRNA molecules, and effect endonucleolytic cleavage of the mRNA. May play a role in the release non-functional ribosomes and degradation of damaged mRNAs. Has endoribonuclease activity. This Methanococcus maripaludis (strain DSM 14266 / JCM 13030 / NBRC 101832 / S2 / LL) protein is Protein pelota homolog.